We begin with the raw amino-acid sequence, 87 residues long: Large ribosomal subunit protein bL28 (87 aa).

Belongs to the bacterial ribosomal protein bL28 family.

This is Large ribosomal subunit protein bL28 from Akkermansia muciniphila (strain ATCC BAA-835 / DSM 22959 / JCM 33894 / BCRC 81048 / CCUG 64013 / CIP 107961 / Muc).